We begin with the raw amino-acid sequence, 270 residues long: Orotidine 5'-phosphate decarboxylase (270 aa).

The active-site Proton donor is Lys95.

Belongs to the OMP decarboxylase family. Type 2 subfamily.

The catalysed reaction is orotidine 5'-phosphate + H(+) = UMP + CO2. The protein operates within pyrimidine metabolism; UMP biosynthesis via de novo pathway; UMP from orotate: step 2/2. This is Orotidine 5'-phosphate decarboxylase from Azoarcus sp. (strain BH72).